An 82-amino-acid polypeptide reads, in one-letter code: Small ribosomal subunit protein uS17 (82 aa).

Belongs to the universal ribosomal protein uS17 family. Part of the 30S ribosomal subunit.

Its function is as follows. One of the primary rRNA binding proteins, it binds specifically to the 5'-end of 16S ribosomal RNA. This is Small ribosomal subunit protein uS17 from Tolumonas auensis (strain DSM 9187 / NBRC 110442 / TA 4).